A 152-amino-acid chain; its full sequence is Large ribosomal subunit protein bL9 (152 aa).

This sequence belongs to the bacterial ribosomal protein bL9 family.

Binds to the 23S rRNA. In Prochlorococcus marinus (strain MIT 9313), this protein is Large ribosomal subunit protein bL9.